A 572-amino-acid polypeptide reads, in one-letter code: 2-isopropylmalate synthase (572 aa).

The Pyruvate carboxyltransferase domain maps to 39–313 (PVWMSTDLRD…HPGLDFSRIN (275 aa)). Residues Asp48, His252, His254, and Asn288 each contribute to the Mg(2+) site. The interval 445 to 572 (VAAPYAYVEH…GVGRQVAATR (128 aa)) is regulatory domain.

It belongs to the alpha-IPM synthase/homocitrate synthase family. LeuA type 2 subfamily. In terms of assembly, homodimer. Mg(2+) is required as a cofactor.

Its subcellular location is the cytoplasm. The catalysed reaction is 3-methyl-2-oxobutanoate + acetyl-CoA + H2O = (2S)-2-isopropylmalate + CoA + H(+). The protein operates within amino-acid biosynthesis; L-leucine biosynthesis; L-leucine from 3-methyl-2-oxobutanoate: step 1/4. Functionally, catalyzes the condensation of the acetyl group of acetyl-CoA with 3-methyl-2-oxobutanoate (2-ketoisovalerate) to form 3-carboxy-3-hydroxy-4-methylpentanoate (2-isopropylmalate). The polypeptide is 2-isopropylmalate synthase (Azoarcus sp. (strain BH72)).